Here is a 188-residue protein sequence, read N- to C-terminus: Ribosome-recycling factor (188 aa).

This sequence belongs to the RRF family.

The protein localises to the cytoplasm. In terms of biological role, responsible for the release of ribosomes from messenger RNA at the termination of protein biosynthesis. May increase the efficiency of translation by recycling ribosomes from one round of translation to another. The polypeptide is Ribosome-recycling factor (Granulibacter bethesdensis (strain ATCC BAA-1260 / CGDNIH1)).